The primary structure comprises 578 residues: MQNKELIQHAAYAAIERILNEYFREENLYQVPPQNHQWSIQLSELETLTGEFRYWSAMGHHMYHPEVWLIDGKSKKITTYKEAIARILQHMAQSADNQTAVQQHMAQIMSDIDNSIHRTARYLQSNTIDYVEDRYIVSEQSLYLGHPFHPTPKSASGFSEADLEKYAPECHTSFQLHYLAVHQDVLLTRYVEGKEDQVEKVLYQLADIDISEIPKDFILLPTHPYQINVLRQHPQYMQYSEQGLIKDLGVSGDSVYPTSSVRTVFSKALNIYLKLPIHVKITNFIRTNDLEQIERTIDAAQVIASVKDEVETPHFKLMFEEGYRALLPNPLGQTVEPEMDLLTNSAMIVREGIPNYHADKDIHVLASLFETMPDSPMSKLSQVIEQSGLAPEAWLECYLNRTLLPILKLFSNTGISLEAHVQNTLIELKDGIPDVCFVRDLEGICLSRTIATEKQLVPNVVAASSPVVYAHDEAWHRLKYYVVVNHLGHLVSTIGKATRNEVVLWQLVAHRLMTWKKEYANNAVFVDCVEDLYQTPTIAAKANLMSKLNDCGANPIYTHIPNPICHNKEVSYCESNNS.

This sequence belongs to the IucA/IucC family. In terms of assembly, forms a mixture of monomer and dimer in solution.

The enzyme catalyses (S)-2,3-diaminopropanoate + citrate + ATP = 2-[(L-alanin-3-ylcarbamoyl)methyl]-2-hydroxybutanedioate + AMP + diphosphate. It functions in the pathway siderophore biosynthesis. In terms of biological role, catalyzes the synthesis of citryl-L-2,3-diaminopropionic acid from L-2,3-diaminopropionic acid (L-Dap) and citrate, the first step in staphyloferrin B biosynthesis. The sequence is that of L-2,3-diaminopropanoate--citrate ligase from Staphylococcus aureus (strain NCTC 8325 / PS 47).